The sequence spans 194 residues: MAKEGLGLEITELRLGLPDAEHVAVANKNGEKKNKRVFSEIDDVGDENSSSGGGGDRKMENKNQVVGWPPVCSYRKKNSVNEASKMYVKVSMDGAPFLRKMDLGMHKGYSDLAFALEKLFGCYGMVEALKNVENGEHVPIYEDKDGDWMLVGDVPWEMFMESCKRLRIMKRADAKGFGLQPKGSLKGFIESVGK.

Residues leucine 13–leucine 17 carry the EAR-like (transcriptional repression) motif. Residues glutamate 40–lysine 62 are disordered. In terms of domain architecture, PB1 spans lysine 85–aspartate 173.

This sequence belongs to the Aux/IAA family. As to quaternary structure, homodimers and heterodimers.

The protein resides in the nucleus. Aux/IAA proteins are short-lived transcriptional factors that function as repressors of early auxin response genes at low auxin concentrations. Repression is thought to result from the interaction with auxin response factors (ARFs), proteins that bind to the auxin-responsive promoter element (AuxRE). Formation of heterodimers with ARF proteins may alter their ability to modulate early auxin response genes expression. The sequence is that of Auxin-induced protein 22A (AUX22A) from Vigna radiata var. radiata (Mung bean).